The following is a 724-amino-acid chain: MRVQILDLPSFGYHFITQTHIPRGKDEYYLRFSQSAEPPRAWRPLSKEEIHTLIQKGNHCDTWHDVLVADPFDASLIRNSSFAGLVRIASLERRLLRYHDFTVPTGITHSTLISCDVGENCAIHHCAYISHYIIGNHVILSRIDELCTTNHAKFGAGIIKDGEQEAVRITIDPLNETGGRKIFPFVGMIAADAFLWACHRDRTLLMQRFESMTQQQHDTRRGYYGTIETQSVIKSCRIIKDVCFGPGSYVKGANKLKNLTVQSSLQEPTQIGEGVELVNGVIGYGCRVFYGVKAVRFVLGNNCALKYGTRLIHSVLGDNSTISCCEVLNALIFPYHEQHHNNSFLIAALIRGQSNIAAGSTIGSNHNTRKNDGEIIAGRGFWSGLASTLKHNCRFASFVLITGKNYPAELDIPFPFSLVTNNERENRLEIMPAYYWLYNMYAIERNEKKFAARDKRKTKTQTVEISVFAPDTIGEIENALALLDSAIERAWVNAGNSALTAEDIVLKHPTKAQTIPVLLTGIEHSTRSTLVLKPLEARKAYRDILIWYCTKTLLSFFEQTTRCISHFTSHDPKTITHNWVNMGGQLVPEDKFETLLQNIETGKFKSWHHIHKEYDALAATYETDKALHAYAVLCSLARTRIDAPLLCTYVQHAITIEKYRVTQIHKTRCKDYLNPFREITYRNPLERNAVLGTPEEDQLIRTTEEESAHLCALYARYIAPPHLG.

This is an uncharacterized protein from Treponema pallidum (strain Nichols).